We begin with the raw amino-acid sequence, 845 residues long: Protein translocase subunit SecA (845 aa).

ATP is bound by residues Gln-88, 106–110, and Asp-495; that span reads GEGKT. Residues 804 to 838 are disordered; that stretch reads SNRANRPQKKAKRQPIVKPDKPGRNDPCPCGSGKK. Residues 809 to 818 are compositionally biased toward basic residues; it reads RPQKKAKRQP. The Zn(2+) site is built by Cys-831, Cys-833, Cys-842, and Cys-843.

Belongs to the SecA family. In terms of assembly, monomer and homodimer. Part of the essential Sec protein translocation apparatus which comprises SecA, SecYEG and auxiliary proteins SecDF. Other proteins may also be involved. It depends on Zn(2+) as a cofactor.

The protein resides in the cell inner membrane. It is found in the cytoplasm. The catalysed reaction is ATP + H2O + cellular proteinSide 1 = ADP + phosphate + cellular proteinSide 2.. Its function is as follows. Part of the Sec protein translocase complex. Interacts with the SecYEG preprotein conducting channel. Has a central role in coupling the hydrolysis of ATP to the transfer of proteins into and across the cell membrane, serving as an ATP-driven molecular motor driving the stepwise translocation of polypeptide chains across the membrane. The protein is Protein translocase subunit SecA of Halothermothrix orenii (strain H 168 / OCM 544 / DSM 9562).